The following is a 423-amino-acid chain: L-cysteine:1D-myo-inositol 2-amino-2-deoxy-alpha-D-glucopyranoside ligase (423 aa).

Position 45 (cysteine 45) interacts with Zn(2+). L-cysteinyl-5'-AMP-binding positions include 45-48, threonine 60, and 83-85; these read CGIT and NVT. The short motif at 47–57 is the 'HIGH' region element; the sequence is ITPYDATHIGH. Residues 197–202 carry the 'ERGGDP' region motif; that stretch reads DRGGDP. Tryptophan 238 lines the L-cysteinyl-5'-AMP pocket. Cysteine 242 serves as a coordination point for Zn(2+). 260 to 262 lines the L-cysteinyl-5'-AMP pocket; that stretch reads GSD. Histidine 267 lines the Zn(2+) pocket. Isoleucine 294 lines the L-cysteinyl-5'-AMP pocket. The short motif at 300-304 is the 'KMSKS' region element; the sequence is KMSKS.

It belongs to the class-I aminoacyl-tRNA synthetase family. MshC subfamily. Monomer. Zn(2+) is required as a cofactor.

The enzyme catalyses 1D-myo-inositol 2-amino-2-deoxy-alpha-D-glucopyranoside + L-cysteine + ATP = 1D-myo-inositol 2-(L-cysteinylamino)-2-deoxy-alpha-D-glucopyranoside + AMP + diphosphate + H(+). Its function is as follows. Catalyzes the ATP-dependent condensation of GlcN-Ins and L-cysteine to form L-Cys-GlcN-Ins. The sequence is that of L-cysteine:1D-myo-inositol 2-amino-2-deoxy-alpha-D-glucopyranoside ligase from Jonesia denitrificans (strain ATCC 14870 / DSM 20603 / BCRC 15368 / CIP 55.134 / JCM 11481 / NBRC 15587 / NCTC 10816 / Prevot 55134) (Listeria denitrificans).